Here is an 874-residue protein sequence, read N- to C-terminus: Cellulose synthase catalytic subunit [UDP-forming] (874 aa).

4 helical membrane passes run 30 to 50, 151 to 171, 173 to 193, and 230 to 250; these read SPFS…VFPL, ILGV…TQPF, PLSQ…VRRM, and LVCG…LVLG. The interval 271–364 is catalytic subdomain A; it reads QWPTVDIFVP…FVAIFDCDHV (94 aa). Asp-313 is an active-site residue. Substrate contacts are provided by Asp-360 and Asp-362. Positions 441–501 are catalytic subdomain B; sequence KPLDEIGGIA…GQRIRWARGM (61 aa). Asp-457 is a catalytic residue. Transmembrane regions (helical) follow at residues 525–545, 547–567, 592–612, 634–654, and 668–688; these read LNAM…TAPL, FLLL…LFVI, IYET…LINP, VISR…AAGV, and VIVS…AVAV. Positions 694 to 790 constitute a PilZ domain; the sequence is QVRRAHRVEI…QHIDFVQCTF (97 aa). Residues 833–853 form a helical membrane-spanning segment; the sequence is SVKVIFRSLTALIAWIVSFIP.

Belongs to the glycosyltransferase 2 family. The cofactor is Mg(2+).

It is found in the cell inner membrane. It catalyses the reaction [(1-&gt;4)-beta-D-glucosyl](n) + UDP-alpha-D-glucose = [(1-&gt;4)-beta-D-glucosyl](n+1) + UDP + H(+). The protein operates within glycan metabolism; bacterial cellulose biosynthesis. Its activity is regulated as follows. Activated by bis-(3'-5') cyclic diguanylic acid (c-di-GMP). In terms of biological role, catalytic subunit of cellulose synthase. It polymerizes uridine 5'-diphosphate glucose to cellulose, which is produced as an extracellular component for mechanical and chemical protection at the onset of the stationary phase, when the cells exhibit multicellular behavior (rdar morphotype). Coexpression of cellulose and thin aggregative fimbriae leads to a hydrophobic network with tightly packed cells embedded in a highly inert matrix. The sequence is that of Cellulose synthase catalytic subunit [UDP-forming] (bcsA) from Salmonella typhimurium (strain LT2 / SGSC1412 / ATCC 700720).